The primary structure comprises 60 residues: Large ribosomal subunit protein uL30 (60 aa).

It belongs to the universal ribosomal protein uL30 family. As to quaternary structure, part of the 50S ribosomal subunit.

This is Large ribosomal subunit protein uL30 from Mycobacteroides abscessus (strain ATCC 19977 / DSM 44196 / CCUG 20993 / CIP 104536 / JCM 13569 / NCTC 13031 / TMC 1543 / L948) (Mycobacterium abscessus).